We begin with the raw amino-acid sequence, 194 residues long: Thymidine kinase (194 aa).

Residues 15-22 (GSMFSGKS) and 88-91 (DEVQ) each bind ATP. The active-site Proton acceptor is Glu89. Positions 145, 148, 183, and 186 each coordinate Zn(2+).

Belongs to the thymidine kinase family. Homotetramer.

It is found in the cytoplasm. It carries out the reaction thymidine + ATP = dTMP + ADP + H(+). In Bacillus licheniformis (strain ATCC 14580 / DSM 13 / JCM 2505 / CCUG 7422 / NBRC 12200 / NCIMB 9375 / NCTC 10341 / NRRL NRS-1264 / Gibson 46), this protein is Thymidine kinase.